Consider the following 595-residue polypeptide: Elongation factor 4 (595 aa).

Residues 1–183 (MNVRNFSIIA…AIVERIPPPP (183 aa)) enclose the tr-type G domain. GTP-binding positions include 13–18 (DHGKST) and 130–133 (NKID).

This sequence belongs to the TRAFAC class translation factor GTPase superfamily. Classic translation factor GTPase family. LepA subfamily.

It is found in the cell membrane. It carries out the reaction GTP + H2O = GDP + phosphate + H(+). Functionally, required for accurate and efficient protein synthesis under certain stress conditions. May act as a fidelity factor of the translation reaction, by catalyzing a one-codon backward translocation of tRNAs on improperly translocated ribosomes. Back-translocation proceeds from a post-translocation (POST) complex to a pre-translocation (PRE) complex, thus giving elongation factor G a second chance to translocate the tRNAs correctly. Binds to ribosomes in a GTP-dependent manner. The polypeptide is Elongation factor 4 (Deinococcus geothermalis (strain DSM 11300 / CIP 105573 / AG-3a)).